A 320-amino-acid chain; its full sequence is Mitochondrial thiamine pyrophosphate carrier (320 aa).

Solcar repeat units follow at residues 13–106, 116–202, and 214–309; these read NTKL…LTEL, REFS…LKHL, and NENL…FCNV. A helical membrane pass occupies residues 19 to 39; sequence AVAGSVSGLVTRALISPFDVI. Residue serine 51 is modified to Phosphoserine. The next 4 helical transmembrane spans lie at 87–107, 122–142, 173–193, and 220–240; these read ILSI…TELV, FVCG…VDVL, VFYK…GLQF, and LLCG…LDLF. A Substrate recognition motif is present at residues 241 to 246; sequence KKRLQV. The chain crosses the membrane as a helical span at residues 293–313; sequence ALSTGFMFFWYEFFCNVFHCM.

The protein belongs to the mitochondrial carrier (TC 2.A.29) family.

The protein localises to the mitochondrion membrane. It carries out the reaction thiamine phosphate(out) + thiamine diphosphate(in) = thiamine phosphate(in) + thiamine diphosphate(out). Its function is as follows. Mitochondrial transporter mediating uptake of thiamine diphosphate into mitochondria. It is not clear if the antiporter activity is affected by the membrane potential or by the proton electrochemical gradient. The protein is Mitochondrial thiamine pyrophosphate carrier (SLC25A19) of Macaca fascicularis (Crab-eating macaque).